A 323-amino-acid chain; its full sequence is tRNA dimethylallyltransferase (323 aa).

12–19 (GPTAAGKT) lines the ATP pocket. Substrate is bound at residue 14 to 19 (TAAGKT). 2 interaction with substrate tRNA regions span residues 37 to 40 (DSAL) and 161 to 165 (QRLIR).

It belongs to the IPP transferase family. In terms of assembly, monomer. It depends on Mg(2+) as a cofactor.

The catalysed reaction is adenosine(37) in tRNA + dimethylallyl diphosphate = N(6)-dimethylallyladenosine(37) in tRNA + diphosphate. Catalyzes the transfer of a dimethylallyl group onto the adenine at position 37 in tRNAs that read codons beginning with uridine, leading to the formation of N6-(dimethylallyl)adenosine (i(6)A). This chain is tRNA dimethylallyltransferase, found in Pseudomonas savastanoi pv. phaseolicola (strain 1448A / Race 6) (Pseudomonas syringae pv. phaseolicola (strain 1448A / Race 6)).